The primary structure comprises 298 residues: Palmitoyl-protein thioesterase 1 (298 aa).

Residues 1 to 16 (MRYFPLLLCLLAITTA) form the signal peptide. Asn20 carries N-linked (GlcNAc...) asparagine glycosylation. Cystine bridges form between Cys37-Cys38, Cys88-Cys120, and Cys144-Cys151. Residue Ser107 is the Nucleophile of the active site. Residue Asp224 is part of the active site. N-linked (GlcNAc...) asparagine glycosylation is present at Asn250. The active site involves His280.

Belongs to the palmitoyl-protein thioesterase family.

It carries out the reaction S-hexadecanoyl-L-cysteinyl-[protein] + H2O = L-cysteinyl-[protein] + hexadecanoate + H(+). In terms of biological role, removes thioester-linked fatty acyl groups such as palmitate (hexadecanoate) from modified cysteine residues in proteins or peptides. This Caenorhabditis elegans protein is Palmitoyl-protein thioesterase 1 (ppt-1).